A 627-amino-acid polypeptide reads, in one-letter code: Threonine--tRNA ligase (627 aa).

Residues 221–523 (DHRKLGRELG…LIEHFAGDFP (303 aa)) form a catalytic region. C319, H370, and H500 together coordinate Zn(2+).

The protein belongs to the class-II aminoacyl-tRNA synthetase family. Homodimer. Zn(2+) serves as cofactor.

It is found in the cytoplasm. The catalysed reaction is tRNA(Thr) + L-threonine + ATP = L-threonyl-tRNA(Thr) + AMP + diphosphate + H(+). Functionally, catalyzes the attachment of threonine to tRNA(Thr) in a two-step reaction: L-threonine is first activated by ATP to form Thr-AMP and then transferred to the acceptor end of tRNA(Thr). Also edits incorrectly charged L-seryl-tRNA(Thr). The chain is Threonine--tRNA ligase from Gloeobacter violaceus (strain ATCC 29082 / PCC 7421).